We begin with the raw amino-acid sequence, 110 residues long: Plasma membrane ATPase (110 aa).

Positions 72 and 76 each coordinate Mg(2+). A disordered region spans residues 88 to 110 (APESTSLNLPNDKELSEIAEQAK). Positions 98-110 (NDKELSEIAEQAK) are enriched in basic and acidic residues.

It belongs to the cation transport ATPase (P-type) (TC 3.A.3) family. Type IIIA subfamily. The N-terminus is blocked.

The protein resides in the cell membrane. The catalysed reaction is ATP + H2O + H(+)(in) = ADP + phosphate + 2 H(+)(out). Functionally, the plasma membrane ATPase of plants and fungi is a hydrogen ion pump. The proton gradient it generates drives the active transport of nutrients by H(+)-symport. The resulting external acidification and/or internal alkinization may mediate growth responses. This chain is Plasma membrane ATPase, found in Avena sativa (Oat).